The sequence spans 304 residues: Acetylglutamate kinase (304 aa).

Substrate is bound by residues 82-83 (GG), arginine 104, and asparagine 197.

It belongs to the acetylglutamate kinase family. ArgB subfamily.

Its subcellular location is the cytoplasm. It carries out the reaction N-acetyl-L-glutamate + ATP = N-acetyl-L-glutamyl 5-phosphate + ADP. The protein operates within amino-acid biosynthesis; L-arginine biosynthesis; N(2)-acetyl-L-ornithine from L-glutamate: step 2/4. Catalyzes the ATP-dependent phosphorylation of N-acetyl-L-glutamate. This Prochlorococcus marinus (strain SARG / CCMP1375 / SS120) protein is Acetylglutamate kinase.